Here is a 488-residue protein sequence, read N- to C-terminus: Zinc metalloproteinase-disintegrin agkistin (488 aa).

Positions 1–20 are cleaved as a signal peptide; it reads MIQVLLVTICLAVFPYQGSS. A propeptide spanning residues 21 to 195 is cleaved from the precursor; the sequence is IILESGNVND…NFPPDGRIEF (175 aa). A Peptidase M12B domain is found at 198-394; sequence RYIELVIVAD…NPLASYCLYN (197 aa). E201 contributes to the Ca(2+) binding site. The N-linked (GlcNAc...) asparagine glycan is linked to N258. D285 provides a ligand contact to Ca(2+). Intrachain disulfides connect C309–C391, C349–C373, and C351–C356. H334 lines the Zn(2+) pocket. E335 is an active-site residue. Residues H338 and H344 each coordinate Zn(2+). The Ca(2+) site is built by C391, N394, V406, N409, E413, E416, and D419. The 85-residue stretch at 404–488 folds into the Disintegrin domain; that stretch reads PPVCGNYYLE…AGCPRNPSHA (85 aa). 7 disulfides stabilise this stretch: C407–C426, C418–C436, C420–C431, C430–C453, C444–C450, C449–C474, and C462–C481. A Cell attachment site motif is present at residues 466–468; sequence RGD.

This sequence belongs to the venom metalloproteinase (M12B) family. P-II subfamily. P-IIb sub-subfamily. In terms of assembly, monomer. The cofactor is Zn(2+). In terms of tissue distribution, expressed by the venom gland.

Its subcellular location is the secreted. Inhibits ADP-induced human platelet aggregation, inhibits bovine aortic endothelial cells (BAEC) migration, has anti-angiogenic activity and induces BAEC and human micro-vascular endothelial cell (HMEC) apoptosis. The metalloproteinase domain may act in hemorrhage. This is Zinc metalloproteinase-disintegrin agkistin from Gloydius halys (Chinese water mocassin).